The chain runs to 146 residues: Large ribosomal subunit protein uL15 (146 aa).

2 stretches are compositionally biased toward basic residues: residues 1–13 (MIRK…RMRG) and 22–38 (SKKR…GQAG). The segment at 1–38 (MIRKRRKITRMRGSRTVGGGCSKKRRGAGHRGGRGQAG) is disordered.

It belongs to the universal ribosomal protein uL15 family. In terms of assembly, part of the 50S ribosomal subunit.

Functionally, binds to the 23S rRNA. The sequence is that of Large ribosomal subunit protein uL15 from Methanothermobacter thermautotrophicus (strain ATCC 29096 / DSM 1053 / JCM 10044 / NBRC 100330 / Delta H) (Methanobacterium thermoautotrophicum).